Here is a 365-residue protein sequence, read N- to C-terminus: NAD(P)H-quinone oxidoreductase subunit 1, chloroplastic (365 aa).

The next 8 membrane-spanning stretches (helical) occupy residues 27–47 (VWIF…VLVI), 98–118 (FSIG…VIPF), 129–149 (IGIF…LMSG), 165–185 (AAQS…ISLL), 203–223 (FWGW…ISSL), 253–273 (FGLF…FVTI), 302–322 (IFGT…FLFI), and 345–365 (FLLP…LFSL).

The protein belongs to the complex I subunit 1 family. In terms of assembly, NDH is composed of at least 16 different subunits, 5 of which are encoded in the nucleus.

The protein localises to the plastid. The protein resides in the chloroplast thylakoid membrane. The catalysed reaction is a plastoquinone + NADH + (n+1) H(+)(in) = a plastoquinol + NAD(+) + n H(+)(out). The enzyme catalyses a plastoquinone + NADPH + (n+1) H(+)(in) = a plastoquinol + NADP(+) + n H(+)(out). NDH shuttles electrons from NAD(P)H:plastoquinone, via FMN and iron-sulfur (Fe-S) centers, to quinones in the photosynthetic chain and possibly in a chloroplast respiratory chain. The immediate electron acceptor for the enzyme in this species is believed to be plastoquinone. Couples the redox reaction to proton translocation, and thus conserves the redox energy in a proton gradient. The sequence is that of NAD(P)H-quinone oxidoreductase subunit 1, chloroplastic from Arabis hirsuta (Hairy rock-cress).